We begin with the raw amino-acid sequence, 206 residues long: Thymidylate kinase (206 aa).

10-17 (GIDGAGKS) contacts ATP.

Belongs to the thymidylate kinase family.

The enzyme catalyses dTMP + ATP = dTDP + ADP. Functionally, phosphorylation of dTMP to form dTDP in both de novo and salvage pathways of dTTP synthesis. In Neisseria meningitidis serogroup C / serotype 2a (strain ATCC 700532 / DSM 15464 / FAM18), this protein is Thymidylate kinase.